The primary structure comprises 425 residues: MAYNPKILQKPKEGEEITIKDNKLHVPNHPIIPFIEGDGIGSDITPAMIKVVDSAVQKAYKGEKKIAWYEVFVGEKCYQKFKDYKELSPEEQWLLPDTIEAINHYKVSIKGPLTTPIGEGFRSLNVALRQKMDLYVCLRPVRWYGSPSPVKEPQKVDMVIFRENSEDIYAGIEWQEGSAEAKKLIHFLQNELKVKKIRFPESSGIGVKPISKEGTERLVRKAIEYAIDNDKPSVTFVHKGNIMKYTEGAFMKWGYALAQKEFNAQVIDKGPWCSLKNPKNGKEIIIKDMIADAFLQQILLRPSEYSVIATMNLNGDYISDALAAMVGGIGIAPGANLNDTVGMFEATHGTAPKYAGLDKVNPGSIILSAEMMLRHMGWVEAADLIVSAMEKAIKSKKVTYDFARLMDGAKEVKCSEFASVMIENM.

Residue threonine 114 coordinates NADP(+). Residues serine 123, asparagine 125, arginine 129, arginine 139, and arginine 162 each coordinate D-threo-isocitrate. Aspartate 316 lines the Mg(2+) pocket. Residues 348 to 354 (HGTAPKY), asparagine 361, tyrosine 400, and arginine 404 each bind NADP(+).

The protein belongs to the isocitrate and isopropylmalate dehydrogenases family. In terms of assembly, homodimer. The cofactor is Mg(2+). Requires Mn(2+) as cofactor.

The enzyme catalyses D-threo-isocitrate + NADP(+) = 2-oxoglutarate + CO2 + NADPH. In terms of biological role, catalyzes the oxidative decarboxylation of isocitrate to 2-oxoglutarate and carbon dioxide with the concomitant reduction of NADP(+). The sequence is that of Isocitrate dehydrogenase [NADP] (icd) from Helicobacter pylori (strain ATCC 700392 / 26695) (Campylobacter pylori).